The chain runs to 83 residues: Small ribosomal subunit protein bS16 (83 aa).

The protein belongs to the bacterial ribosomal protein bS16 family.

This Pseudomonas fluorescens (strain SBW25) protein is Small ribosomal subunit protein bS16.